Reading from the N-terminus, the 371-residue chain is Cytochrome b (371 aa).

The next 8 helical transmembrane spans lie at 25 to 45 (FGSM…FLAV), 69 to 90 (WMMQ…YIHI), 105 to 125 (WLSG…GXXX), 170 to 190 (XXXX…XXXX), 218 to 238 (YKDL…VSFL), 280 to 300 (LGGA…PFTH), 312 to 332 (IMQL…WAAT), and 339 to 358 (FTMI…IMNP). 2 residues coordinate heme b: histidine 75 and histidine 89. 2 residues coordinate heme b: residue 174 and residue 188.

It belongs to the cytochrome b family. The cytochrome bc1 complex contains 3 respiratory subunits (MT-CYB, CYC1 and UQCRFS1), 2 core proteins (UQCRC1 and UQCRC2) and probably 6 low-molecular weight proteins. Requires heme b as cofactor.

The protein localises to the mitochondrion inner membrane. Component of the ubiquinol-cytochrome c reductase complex (complex III or cytochrome b-c1 complex) that is part of the mitochondrial respiratory chain. The b-c1 complex mediates electron transfer from ubiquinol to cytochrome c. Contributes to the generation of a proton gradient across the mitochondrial membrane that is then used for ATP synthesis. This chain is Cytochrome b (MT-CYB), found in Eryx tataricus (Tartar sand boa).